We begin with the raw amino-acid sequence, 286 residues long: 33 kDa chaperonin (286 aa).

2 disulfides stabilise this stretch: Cys-233–Cys-235 and Cys-267–Cys-270.

Belongs to the HSP33 family. Post-translationally, under oxidizing conditions two disulfide bonds are formed involving the reactive cysteines. Under reducing conditions zinc is bound to the reactive cysteines and the protein is inactive.

The protein localises to the cytoplasm. Functionally, redox regulated molecular chaperone. Protects both thermally unfolding and oxidatively damaged proteins from irreversible aggregation. Plays an important role in the bacterial defense system toward oxidative stress. This is 33 kDa chaperonin from Histophilus somni (strain 129Pt) (Haemophilus somnus).